We begin with the raw amino-acid sequence, 511 residues long: Phosphomethylpyrimidine synthase (511 aa).

Substrate is bound by residues Asn127, Met156, Tyr185, His221, 241 to 243 (SRG), 282 to 285 (DGLR), and Glu321. His325 contributes to the Zn(2+) binding site. Residue Tyr348 participates in substrate binding. His389 contributes to the Zn(2+) binding site. Residues Cys469, Cys472, and Cys477 each coordinate [4Fe-4S] cluster. The interval 492-511 (KGMEEKSEVTICNRKKESGK) is disordered.

The protein belongs to the ThiC family. The cofactor is [4Fe-4S] cluster.

It carries out the reaction 5-amino-1-(5-phospho-beta-D-ribosyl)imidazole + S-adenosyl-L-methionine = 4-amino-2-methyl-5-(phosphooxymethyl)pyrimidine + CO + 5'-deoxyadenosine + formate + L-methionine + 3 H(+). The protein operates within cofactor biosynthesis; thiamine diphosphate biosynthesis. Its function is as follows. Catalyzes the synthesis of the hydroxymethylpyrimidine phosphate (HMP-P) moiety of thiamine from aminoimidazole ribotide (AIR) in a radical S-adenosyl-L-methionine (SAM)-dependent reaction. The protein is Phosphomethylpyrimidine synthase of Leptospira borgpetersenii serovar Hardjo-bovis (strain JB197).